The primary structure comprises 609 residues: UvrABC system protein C (609 aa).

A GIY-YIG domain is found at 13 to 91 (HQPGVYRMFD…IKAFQPRYNV (79 aa)). One can recognise a UVR domain in the interval 201–236 (QQVLEHLIKKMEQASMQLNFEQAAYFRDQIQAIRAV).

It belongs to the UvrC family. As to quaternary structure, interacts with UvrB in an incision complex.

It localises to the cytoplasm. In terms of biological role, the UvrABC repair system catalyzes the recognition and processing of DNA lesions. UvrC both incises the 5' and 3' sides of the lesion. The N-terminal half is responsible for the 3' incision and the C-terminal half is responsible for the 5' incision. This Histophilus somni (strain 129Pt) (Haemophilus somnus) protein is UvrABC system protein C.